Reading from the N-terminus, the 133-residue chain is Small ribosomal subunit protein bS6 (133 aa).

The segment at 93-133 is disordered; sequence KTAVTEPSPMMKEEPRRERRDDSAPRQERAEKKTETTEDNA. Residues 103–133 show a composition bias toward basic and acidic residues; that stretch reads MKEEPRRERRDDSAPRQERAEKKTETTEDNA.

The protein belongs to the bacterial ribosomal protein bS6 family.

In terms of biological role, binds together with bS18 to 16S ribosomal RNA. This Alteromonas mediterranea (strain DSM 17117 / CIP 110805 / LMG 28347 / Deep ecotype) protein is Small ribosomal subunit protein bS6.